Here is a 73-residue protein sequence, read N- to C-terminus: Homeodomain-only protein (73 aa).

The homeobox; degenerate DNA-binding region spans 3-62 (TEKSVTPTEEQLEILEYNFCKVNKHPDPTTLCLIAAETGLSEEQTLKWFKQRLAEWRKSE).

Its subcellular location is the nucleus. It is found in the cytoplasm. In terms of biological role, atypical homeodomain protein which does not bind DNA and is required to modulate cardiac growth and development. May act via an interaction with SRF, leading to modulate the expression of SRF-dependent cardiac-specific genes and cardiac development. May act as a co-chaperone for HSPA1A and HSPA1B chaperone proteins and assist in chaperone-mediated protein refolding. The polypeptide is Homeodomain-only protein (HOPX) (Gallus gallus (Chicken)).